Reading from the N-terminus, the 637-residue chain is 3D-(3,5/4)-trihydroxycyclohexane-1,2-dione hydrolase (637 aa).

Glu65 contacts thiamine diphosphate. Residues 441 to 521 (SLPGDLQRLW…INVLLFDNSG (81 aa)) form a thiamine pyrophosphate binding region. Mg(2+) is bound by residues Asp492 and Asn519.

The protein belongs to the TPP enzyme family. Requires Mg(2+) as cofactor. Thiamine diphosphate is required as a cofactor.

The catalysed reaction is 3D-3,5/4-trihydroxycyclohexane-1,2-dione + H2O = 5-deoxy-D-glucuronate + H(+). Its pathway is polyol metabolism; myo-inositol degradation into acetyl-CoA; acetyl-CoA from myo-inositol: step 3/7. Functionally, involved in the cleavage of the C1-C2 bond of 3D-(3,5/4)-trihydroxycyclohexane-1,2-dione (THcHDO) to yield 5-deoxy-glucuronate (5DG). This Halalkalibacterium halodurans (strain ATCC BAA-125 / DSM 18197 / FERM 7344 / JCM 9153 / C-125) (Bacillus halodurans) protein is 3D-(3,5/4)-trihydroxycyclohexane-1,2-dione hydrolase.